A 51-amino-acid chain; its full sequence is Small ribosomal subunit protein eS31 (51 aa).

Zn(2+)-binding residues include Cys-22, Cys-25, Cys-40, and Cys-43. The C4-type zinc-finger motif lies at 22-43 (CVRCSHGIFMADHGDRYACGRC).

It belongs to the eukaryotic ribosomal protein eS31 family. In terms of assembly, part of the 30S ribosomal subunit. It depends on Zn(2+) as a cofactor.

The protein is Small ribosomal subunit protein eS31 of Methanosphaera stadtmanae (strain ATCC 43021 / DSM 3091 / JCM 11832 / MCB-3).